The sequence spans 473 residues: Glutamate--tRNA ligase 1 (473 aa).

Positions 10–20 (PSPTGFLHIGG) match the 'HIGH' region motif. Residues 252-256 (KLSKR) carry the 'KMSKS' region motif. Lysine 255 is an ATP binding site.

This sequence belongs to the class-I aminoacyl-tRNA synthetase family. Glutamate--tRNA ligase type 1 subfamily. Monomer.

The protein resides in the cytoplasm. It catalyses the reaction tRNA(Glu) + L-glutamate + ATP = L-glutamyl-tRNA(Glu) + AMP + diphosphate. In terms of biological role, catalyzes the attachment of glutamate to tRNA(Glu) in a two-step reaction: glutamate is first activated by ATP to form Glu-AMP and then transferred to the acceptor end of tRNA(Glu). This chain is Glutamate--tRNA ligase 1, found in Wolbachia pipientis wMel.